Consider the following 353-residue polypeptide: F-box protein At3g58530 (353 aa).

The F-box; degenerate domain occupies 8-56; that stretch reads EEEEETWRREIVTSVMRLVSTRLPQTDLISLLLVSPWLYRTLISYPSIW.

The chain is F-box protein At3g58530 from Arabidopsis thaliana (Mouse-ear cress).